Consider the following 417-residue polypeptide: MFYKNDQIAGFDDSIWQAMEQEDKRQQDHVELIASENYTSARVMQAQGSQLTNKYAEGYPGKRYYGGCEHVDVIEQLAIDRAKELFGADYANVQPHSGSQANAAVFMALLKPGETVLGMSLAHGGHLTHGSKVSFSGKIYNAVQYGLNEATGEIDYEEVERLAKEHQPKMIIAGFSAYSRVVDWQRFRDIADSIGAWLFVDMAHVAGLVAAGLYPNPVPIADVVTTTTHKTLRGPRGGLILAKQNDELAKKLNSAVFPAGQGGPLMHVIAAKAICFKEALGEGYVEYQQQVIDNAREMAKTFQTRGYNVVSGGTDNHLFLLDLIDKGITGKDADAALGRANITVNKNSVPNDPQSPFVTSGLRIGTPAITSRGFGLEEAAALTGWICDVLDDISNEQVIDDVRSKVLDLCEKNPVYR.

Residues Leu-121 and Gly-125 to Leu-127 each bind (6S)-5,6,7,8-tetrahydrofolate. Lys-230 is modified (N6-(pyridoxal phosphate)lysine). Ser-355–Phe-357 contributes to the (6S)-5,6,7,8-tetrahydrofolate binding site.

This sequence belongs to the SHMT family. In terms of assembly, homodimer. Pyridoxal 5'-phosphate is required as a cofactor.

It localises to the cytoplasm. It catalyses the reaction (6R)-5,10-methylene-5,6,7,8-tetrahydrofolate + glycine + H2O = (6S)-5,6,7,8-tetrahydrofolate + L-serine. It participates in one-carbon metabolism; tetrahydrofolate interconversion. Its pathway is amino-acid biosynthesis; glycine biosynthesis; glycine from L-serine: step 1/1. In terms of biological role, catalyzes the reversible interconversion of serine and glycine with tetrahydrofolate (THF) serving as the one-carbon carrier. This reaction serves as the major source of one-carbon groups required for the biosynthesis of purines, thymidylate, methionine, and other important biomolecules. Also exhibits THF-independent aldolase activity toward beta-hydroxyamino acids, producing glycine and aldehydes, via a retro-aldol mechanism. The sequence is that of Serine hydroxymethyltransferase 2 from Colwellia psychrerythraea (strain 34H / ATCC BAA-681) (Vibrio psychroerythus).